The primary structure comprises 97 residues: Large ribosomal subunit protein bL28 (97 aa).

It belongs to the bacterial ribosomal protein bL28 family.

The chain is Large ribosomal subunit protein bL28 from Rickettsia rickettsii (strain Iowa).